A 220-amino-acid polypeptide reads, in one-letter code: 2-hydroxy-3-keto-5-methylthiopentenyl-1-phosphate phosphatase (220 aa).

The protein belongs to the HAD-like hydrolase superfamily. MtnX family.

The catalysed reaction is 2-hydroxy-5-methylsulfanyl-3-oxopent-1-enyl phosphate + H2O = 1,2-dihydroxy-5-(methylsulfanyl)pent-1-en-3-one + phosphate. Its pathway is amino-acid biosynthesis; L-methionine biosynthesis via salvage pathway; L-methionine from S-methyl-5-thio-alpha-D-ribose 1-phosphate: step 4/6. Its function is as follows. Dephosphorylates 2-hydroxy-3-keto-5-methylthiopentenyl-1-phosphate (HK-MTPenyl-1-P) yielding 1,2-dihydroxy-3-keto-5-methylthiopentene (DHK-MTPene). In Geobacillus kaustophilus (strain HTA426), this protein is 2-hydroxy-3-keto-5-methylthiopentenyl-1-phosphate phosphatase.